The primary structure comprises 312 residues: METENDTMVTEFIILGLTDSATLRAILFVFFLPVYIVTVVGNISIILLIRSSPQLHTPMYLFLSHLAFVDIGYSTSVTPIMLISFLREETTIPLAGCAAQLGSDVAFGTTECFLLATMAYDRYVAICSPLLYSTQMSPAICCFLLGASYLGGCMNASSFTGCFVNLNFCGPNKVNHFFCDLFPLVKLSCGHAYIAEISPSISSASVLVSTLSTIIVSYIYILHSILRMRSAEGRNKAFSTCTSHLTAVTLFYGTVLFVYVMPKSSYSADQVKVASVVYTVVIPMLNPLIYSLRNKEVKEAMKKLMARTHWFP.

Topologically, residues 1–25 (METENDTMVTEFIILGLTDSATLRA) are extracellular. N-linked (GlcNAc...) asparagine glycosylation is present at Asn5. Residues 26-46 (ILFVFFLPVYIVTVVGNISII) traverse the membrane as a helical segment. The Cytoplasmic portion of the chain corresponds to 47–54 (LLIRSSPQ). The helical transmembrane segment at 55-75 (LHTPMYLFLSHLAFVDIGYST) threads the bilayer. The Extracellular segment spans residues 76 to 99 (SVTPIMLISFLREETTIPLAGCAA). An intrachain disulfide couples Cys97 to Cys189. A helical membrane pass occupies residues 100-120 (QLGSDVAFGTTECFLLATMAY). Residues 121–133 (DRYVAICSPLLYS) are Cytoplasmic-facing. The helical transmembrane segment at 134–154 (TQMSPAICCFLLGASYLGGCM) threads the bilayer. Over 155–196 (NASSFTGCFVNLNFCGPNKVNHFFCDLFPLVKLSCGHAYIAE) the chain is Extracellular. Residues 197–217 (ISPSISSASVLVSTLSTIIVS) form a helical membrane-spanning segment. Topologically, residues 218–237 (YIYILHSILRMRSAEGRNKA) are cytoplasmic. Residues 238 to 258 (FSTCTSHLTAVTLFYGTVLFV) form a helical membrane-spanning segment. Over 259-271 (YVMPKSSYSADQV) the chain is Extracellular. A helical membrane pass occupies residues 272 to 292 (KVASVVYTVVIPMLNPLIYSL). The Cytoplasmic portion of the chain corresponds to 293-312 (RNKEVKEAMKKLMARTHWFP).

It belongs to the G-protein coupled receptor 1 family.

The protein localises to the cell membrane. Functionally, potential odorant receptor. In Mus musculus (Mouse), this protein is Olfactory receptor 5P4.